Here is an 874-residue protein sequence, read N- to C-terminus: MSNHLSGSEIRQRFLDFFAARNHKILPSASLVPEDPTVLLTIAGMLPFKPIFLGQKTPEFPRATTSQKCIRTNDIENVGRTARHHTFFEMLGNFSFGDYFKEQAIAWAWELSTEVFNLPPERLVVSVFKEDEEAFAIWRDKIGIPAHRIQKMGEEDNFWVSGPTGPCGPCSEIYYDFHPELGDKTIDLEDDSRFIEFYNLVFMQYNRDADGNLTPLANKNIDTGMGLERMAQILQKVANNYETDLIFPIVAEAARLAAIDYQKADEKTKVSLKVIGDHVRSVVHMIADGISASNTDRGYVLRRLIRRVVRHGRLIGIEGQFITKVAEVAIALSESVYGNVRERETVIKAELEREEARFLETLERGEKLLESILEKEKSQISGVDAFTLYDTYGFPLELTQEIAEEQGLSVDTAGFEQEMKKQQQRSKAAHETIDLTVQGSLDKLAEHIHPTEFLGYTDLQATATVTAVLVAGKTVESAAAGTEVQVVLDRTPFYAESGGQIGDKGYLTGDNLLIRIEDVQKESGIFIHFGRIERGIVTTGDTINAQIDRSCRRRAQANHTATHLLQSALKKLVDGGISQAGSLVSFDRLRFDFNCPRPLTSSELQQVEEQINTWIAEAHDTQIAVMGLEEAKQKGAIAMFGEKYGSEVRVIDIPSVSMELCGGTHVKNTAEIGLFKIISETGIAAGIRRIEAVAGPAVLAYLNERDQVVRALCDRFKVKPLEIPDRITALQSELKGTQKQLEAVKQELALNKSDALLSQAESIGEFKLLVASLGDIDANALMAAAERLQQKLGEGAVILASTPAADKVSLVAAFSPRVIKDKGLQAGKFIGAIAKICAGGGGGRPNLAQAGGRDASKLSEALAKAKSQLTSSLQ.

Positions 559, 563, 661, and 665 each coordinate Zn(2+).

Belongs to the class-II aminoacyl-tRNA synthetase family. It depends on Zn(2+) as a cofactor.

The protein localises to the cytoplasm. It catalyses the reaction tRNA(Ala) + L-alanine + ATP = L-alanyl-tRNA(Ala) + AMP + diphosphate. Its function is as follows. Catalyzes the attachment of alanine to tRNA(Ala) in a two-step reaction: alanine is first activated by ATP to form Ala-AMP and then transferred to the acceptor end of tRNA(Ala). Also edits incorrectly charged Ser-tRNA(Ala) and Gly-tRNA(Ala) via its editing domain. The chain is Alanine--tRNA ligase from Microcystis aeruginosa (strain NIES-843 / IAM M-2473).